The following is a 372-amino-acid chain: Queuine tRNA-ribosyltransferase (372 aa).

Catalysis depends on Asp-92, which acts as the Proton acceptor. Substrate-binding positions include 92 to 96 (DSGGY), Asp-146, Gln-188, and Gly-215. The segment at 246–252 (GIGSLKE) is RNA binding. Asp-265 serves as the catalytic Nucleophile. The interval 270–274 (TRLGR) is RNA binding; important for wobble base 34 recognition. 4 residues coordinate Zn(2+): Cys-303, Cys-305, Cys-308, and His-334.

It belongs to the queuine tRNA-ribosyltransferase family. In terms of assembly, homodimer. Within each dimer, one monomer is responsible for RNA recognition and catalysis, while the other monomer binds to the replacement base PreQ1. Requires Zn(2+) as cofactor.

It carries out the reaction 7-aminomethyl-7-carbaguanine + guanosine(34) in tRNA = 7-aminomethyl-7-carbaguanosine(34) in tRNA + guanine. Its pathway is tRNA modification; tRNA-queuosine biosynthesis. Its function is as follows. Catalyzes the base-exchange of a guanine (G) residue with the queuine precursor 7-aminomethyl-7-deazaguanine (PreQ1) at position 34 (anticodon wobble position) in tRNAs with GU(N) anticodons (tRNA-Asp, -Asn, -His and -Tyr). Catalysis occurs through a double-displacement mechanism. The nucleophile active site attacks the C1' of nucleotide 34 to detach the guanine base from the RNA, forming a covalent enzyme-RNA intermediate. The proton acceptor active site deprotonates the incoming PreQ1, allowing a nucleophilic attack on the C1' of the ribose to form the product. After dissociation, two additional enzymatic reactions on the tRNA convert PreQ1 to queuine (Q), resulting in the hypermodified nucleoside queuosine (7-(((4,5-cis-dihydroxy-2-cyclopenten-1-yl)amino)methyl)-7-deazaguanosine). The protein is Queuine tRNA-ribosyltransferase of Prochlorococcus marinus (strain MIT 9301).